Reading from the N-terminus, the 590-residue chain is Transcription factor bHLH13 (590 aa).

Disordered stretches follow at residues 274-296 (LQHHQHHQQQQQQPPQQQQHRQF) and 385-439 (AASS…EAER). Over residues 281–293 (QQQQQQPPQQQQH) the composition is skewed to low complexity. A compositionally biased stretch (basic residues) spans 416-425 (RPRKRGRRPA). In terms of domain architecture, bHLH spans 429–478 (AEALNHVEAERQRREKLNQRFYALRSVVPNISKMDKASLLGDAVSYINEL).

Homodimer.

The protein resides in the nucleus. The sequence is that of Transcription factor bHLH13 (BHLH13) from Arabidopsis thaliana (Mouse-ear cress).